A 136-amino-acid chain; its full sequence is ATP synthase epsilon chain, chloroplastic (136 aa).

The protein belongs to the ATPase epsilon chain family. As to quaternary structure, F-type ATPases have 2 components, CF(1) - the catalytic core - and CF(0) - the membrane proton channel. CF(1) has five subunits: alpha(3), beta(3), gamma(1), delta(1), epsilon(1). CF(0) has three main subunits: a, b and c.

It localises to the plastid. The protein localises to the chloroplast thylakoid membrane. In terms of biological role, produces ATP from ADP in the presence of a proton gradient across the membrane. The polypeptide is ATP synthase epsilon chain, chloroplastic (Cucumis sativus (Cucumber)).